Consider the following 242-residue polypeptide: NADH-quinone oxidoreductase subunit C (242 aa).

The insert stretch occupies residues 67–101; the sequence is VVNSVGLGHKEQGAKPITNRRTTSDNVGESKSIDY.

Belongs to the complex I 30 kDa subunit family. In terms of assembly, NDH-1 is composed of 14 different subunits. Subunits NuoB, C, D, E, F, and G constitute the peripheral sector of the complex.

It is found in the cell inner membrane. It carries out the reaction a quinone + NADH + 5 H(+)(in) = a quinol + NAD(+) + 4 H(+)(out). Functionally, NDH-1 shuttles electrons from NADH, via FMN and iron-sulfur (Fe-S) centers, to quinones in the respiratory chain. The immediate electron acceptor for the enzyme in this species is believed to be ubiquinone. Couples the redox reaction to proton translocation (for every two electrons transferred, four hydrogen ions are translocated across the cytoplasmic membrane), and thus conserves the redox energy in a proton gradient. The chain is NADH-quinone oxidoreductase subunit C from Rickettsia conorii (strain ATCC VR-613 / Malish 7).